Reading from the N-terminus, the 503-residue chain is Alpha-1,3/1,6-mannosyltransferase ALG2 (503 aa).

A run of 2 helical transmembrane segments spans residues 64–84 (VYGD…FATI) and 112–132 (TCIP…CHFP). Asn-170, Asn-303, Asn-371, and Asn-400 each carry an N-linked (GlcNAc...) asparagine glycan. Residues 443 to 463 (WEIFGISFSNFILHMAFIKIL) form a helical membrane-spanning segment.

Belongs to the glycosyltransferase group 1 family. Glycosyltransferase 4 subfamily. As to quaternary structure, interacts with ALG1.

The protein resides in the endoplasmic reticulum membrane. It catalyses the reaction a beta-D-Man-(1-&gt;4)-beta-D-GlcNAc-(1-&gt;4)-alpha-D-GlcNAc-diphospho-di-trans,poly-cis-dolichol + GDP-alpha-D-mannose = an alpha-D-Man-(1-&gt;3)-beta-D-Man-(1-&gt;4)-beta-D-GlcNAc-(1-&gt;4)-alpha-D-GlcNAc-diphospho-di-trans,poly-cis-dolichol + GDP + H(+). The catalysed reaction is an alpha-D-Man-(1-&gt;3)-beta-D-Man-(1-&gt;4)-beta-D-GlcNAc-(1-&gt;4)-alpha-D-GlcNAc-diphospho-di-trans,poly-cis-dolichol + GDP-alpha-D-mannose = an alpha-D-Man-(1-&gt;3)-[alpha-D-Man-(1-&gt;6)]-beta-D-Man-(1-&gt;4)-beta-D-GlcNAc-(1-&gt;4)-alpha-D-GlcNAc-diphospho-di-trans,poly-cis-dolichol + GDP + H(+). Its pathway is protein modification; protein glycosylation. Its function is as follows. Mannosylates Man(2)GlcNAc(2)-dolichol diphosphate and Man(1)GlcNAc(2)-dolichol diphosphate to form Man(3)GlcNAc(2)-dolichol diphosphate. This is Alpha-1,3/1,6-mannosyltransferase ALG2 (ALG2) from Saccharomyces cerevisiae (strain ATCC 204508 / S288c) (Baker's yeast).